The following is a 342-amino-acid chain: Isopentenyl-diphosphate delta-isomerase (342 aa).

Position 11–12 (11–12) interacts with substrate; it reads RK. FMN is bound by residues S68, 69–71, S99, and N127; that span reads SMT. Residue 99 to 101 participates in substrate binding; that stretch reads SMR. Residue Q162 participates in substrate binding. E163 is a Mg(2+) binding site. FMN contacts are provided by residues K194, T224, 274 to 276, and 295 to 296; these read GLK and AG.

This sequence belongs to the IPP isomerase type 2 family. In terms of assembly, homooctamer. Dimer of tetramers. Requires FMN as cofactor. The cofactor is NADPH. Mg(2+) serves as cofactor.

It is found in the cytoplasm. The enzyme catalyses isopentenyl diphosphate = dimethylallyl diphosphate. Involved in the biosynthesis of isoprenoids. Catalyzes the 1,3-allylic rearrangement of the homoallylic substrate isopentenyl (IPP) to its allylic isomer, dimethylallyl diphosphate (DMAPP). In Rickettsia peacockii (strain Rustic), this protein is Isopentenyl-diphosphate delta-isomerase.